The chain runs to 260 residues: uncharacterized protein (260 aa).

Residues 1 to 22 form the signal peptide; the sequence is MGYSKRFALYISILILIVMVAG. Residue Cys23 is the site of N-palmitoyl cysteine attachment. The S-diacylglycerol cysteine moiety is linked to residue Cys23.

This sequence belongs to the staphylococcal tandem lipoprotein family.

It is found in the cell membrane. This is an uncharacterized protein from Staphylococcus aureus (strain N315).